Here is a 118-residue protein sequence, read N- to C-terminus: Large ribosomal subunit protein bL17 (118 aa).

Belongs to the bacterial ribosomal protein bL17 family. In terms of assembly, part of the 50S ribosomal subunit. Contacts protein L32.

In Onion yellows phytoplasma (strain OY-M), this protein is Large ribosomal subunit protein bL17.